A 389-amino-acid polypeptide reads, in one-letter code: Xylose isomerase (389 aa).

Catalysis depends on residues His101 and Asp104. Positions 232, 268, 271, 296, 307, and 309 each coordinate Mg(2+).

The protein belongs to the xylose isomerase family. As to quaternary structure, homotetramer. Mg(2+) serves as cofactor.

The protein localises to the cytoplasm. The catalysed reaction is alpha-D-xylose = alpha-D-xylulofuranose. The polypeptide is Xylose isomerase (Lactococcus lactis subsp. cremoris (strain SK11)).